The primary structure comprises 377 residues: Anhydro-N-acetylmuramic acid kinase (377 aa).

19-26 (GTSLDGVD) is an ATP binding site.

The protein belongs to the anhydro-N-acetylmuramic acid kinase family.

It catalyses the reaction 1,6-anhydro-N-acetyl-beta-muramate + ATP + H2O = N-acetyl-D-muramate 6-phosphate + ADP + H(+). It participates in amino-sugar metabolism; 1,6-anhydro-N-acetylmuramate degradation. Its pathway is cell wall biogenesis; peptidoglycan recycling. In terms of biological role, catalyzes the specific phosphorylation of 1,6-anhydro-N-acetylmuramic acid (anhMurNAc) with the simultaneous cleavage of the 1,6-anhydro ring, generating MurNAc-6-P. Is required for the utilization of anhMurNAc either imported from the medium or derived from its own cell wall murein, and thus plays a role in cell wall recycling. The chain is Anhydro-N-acetylmuramic acid kinase from Roseobacter denitrificans (strain ATCC 33942 / OCh 114) (Erythrobacter sp. (strain OCh 114)).